Reading from the N-terminus, the 485-residue chain is Cysteine--tRNA ligase (485 aa).

Cys27 serves as a coordination point for Zn(2+). The short motif at Ile29–His39 is the 'HIGH' region element. The Zn(2+) site is built by Cys208, His233, and Glu237. Residues Lys265–Ser269 carry the 'KMSKS' region motif. Lys268 lines the ATP pocket.

It belongs to the class-I aminoacyl-tRNA synthetase family. Monomer. It depends on Zn(2+) as a cofactor.

The protein resides in the cytoplasm. The catalysed reaction is tRNA(Cys) + L-cysteine + ATP = L-cysteinyl-tRNA(Cys) + AMP + diphosphate. The polypeptide is Cysteine--tRNA ligase (Nitratidesulfovibrio vulgaris (strain ATCC 29579 / DSM 644 / CCUG 34227 / NCIMB 8303 / VKM B-1760 / Hildenborough) (Desulfovibrio vulgaris)).